Here is a 211-residue protein sequence, read N- to C-terminus: Thymidylate kinase (211 aa).

10–17 (GIDGSGKT) lines the ATP pocket.

It belongs to the thymidylate kinase family.

The catalysed reaction is dTMP + ATP = dTDP + ADP. In terms of biological role, phosphorylation of dTMP to form dTDP in both de novo and salvage pathways of dTTP synthesis. This Prochlorococcus marinus (strain NATL1A) protein is Thymidylate kinase.